Consider the following 321-residue polypeptide: Pheromone-regulated membrane protein 5 (321 aa).

The disordered stretch occupies residues 35–59 (SSSSSSSSLPLLSNSTSSSIIPSIT). A helical transmembrane segment spans residues 81-101 (FIIVGGIAGVIFLAILLWWVI). A Phosphoserine modification is found at S132. Low complexity predominate over residues 241-250 (TISSSSASSL). The tract at residues 241–321 (TISSSSASSL…HMLEGKEQDE (81 aa)) is disordered. Positions 253 to 264 (GNEKEVGEDIRK) are enriched in basic and acidic residues. Positions 279–288 (SPESDGSVNR) are enriched in polar residues. S282, S285, and S291 each carry phosphoserine. Positions 312 to 321 (HMLEGKEQDE) are enriched in basic and acidic residues. K317 participates in a covalent cross-link: Glycyl lysine isopeptide (Lys-Gly) (interchain with G-Cter in ubiquitin).

The protein belongs to the PRM5 family.

It is found in the membrane. The polypeptide is Pheromone-regulated membrane protein 5 (PRM5) (Saccharomyces cerevisiae (strain YJM789) (Baker's yeast)).